The following is a 1790-amino-acid chain: MTTNHLENKVHAATESLFYFSNEFPKRDLQDLFRQAHTRSKLAQHKCLAQFIQDATQTVKQEIQGLSMKLQHLFKPLESVLTWAEDHELREGALSGAIDGVLLIVAQMTTLIGYLENNTAKMDDIATASLAGLGVGLLTACAVSSASTIADLSATGADAVRTAFRLGVHVYYVSQTLEALDPSARPETWAYVINNVTPTEAQEQLDTLYANSTQPATSKVFISALSRSSVTVSGPPARLKALVTGSEFFRTSRYIALPVYGGLCHAPHVYGQDDVDMVMQSRAFSVQKAPATHLKSVWSTSSGYPYLVEDSKSLFASVVAELLTKAICWDSVVSSIVKYTGLTDASEMIIYNYGNSIPLNELESALKSSPAKLKVVNSNLLSWMGHNSPTSVKPRNTLQSKLAIVGMSCRLPGGATSNELFWDVLRRGVDTSQVIPADRFDVATHYDPAGKQLNKSMTQYGCFIDEPGLFDAPFFNMSPREAQTVDPQMRLALVTAYEALEQAGYVANRTASTRLERIGTYYGQAADDYREVNQGQEVSTYYIPGGCRAFGPGRINYFFKFAGPSYSIDTACSSGLAAVEVACQALWRGDVDTAVTGGVNILTNPDGFTGLCSGHFLSKGHNACKTWDATADGYCRADGVGSLVIKRLEDAEDDNDNILGVILGAGTNHSAQAVSITHPHAGHQAYLARQVLRQAGVDPLDVSYVELHGTGTQAGDSEEMQGILDVYAPLSKRRSQSQPLHIGAVKANMGHSESSAGTTALVKVLLMLQNNVIPPHIGITTEMNPKFGHDFKKRNLHIPFELTPWEHTDDKRRIAVVNNFGAAGGNTTMILEDAPMRSISQSDTRKTHVVVLSAKTKTSLVANVDRLISYIDSHPDTQIANVSYTTTARRYQHVLRVAISTSEIAHLQKQLYSHREKIEYIQPVRKAEPPPVAFSFTGQGASHKSMNLELYRDVPTFREFVHQLDSLTRAQGFESFICALDGSHDKDHQHSPVVTQLALVCSEIALAKYWASIGVLPNIVIGHSLGEYAAMHIAGVISASDAIFLVGRRAQLLQERCKIGSHLMMAVRASVDQITQSAAGKPFTVACVNGPADTVLAGTKEEIEVIKTPLESSGLQCIKLDVAFAFHSEQTDPLLDDFEALAKSGVIFAEPKLPVISPLLGKVIFDAKTINATYVRRATREAVDFLAALNNAQEIGAIGGDTVWVEIGPHPVCTGFVRSTIPSVKLALPSFRRGEENWKTLSDSIAQLYTVGVDIDWTELHRPFEKNLRLLDLPTYAFNEKTYWLQYKGDWCLTKGNTFYADEQKIVRGQLPSVSELHTSTVQQIVEQVFDTDTGSCTVVIESDMMQPDFLAAAHGHRMNDCGVATSSIHGDIAFTLAEHIHKKLGVHGKDTRYNVANLQVTKALVARKNTANPQVIRVTASTTDVRSGIDLVWQNINANGDSAEPFATSSIHAGISTDWISSWSSLTHLVRDRIETLDRLVAEGKANRLSHNMAYTLFASNLVDYADKYRGMQSVVMHGLEGCADVELSTKESGVWTVPPYFIDSVAHLAGFIMNCSDAIDAKKFFCITPGWKTMRFARPLVPGARYQSYVKMIPTVEDDTAYFGDVYILQDGVIIGLVEGIEFHRYRRILLERLFSAPDSTNLDDTTETKDISSSTQHSVPVSRQVPPAAKSSAQTVFESSLPFAVPGPRKSTARPAVDEIAAREKPVASQSSSITNRAMQLIADEVGVELADLCDDVGFSDLGVDSLMSLVIADTFRATLDIKVNGSLFLDYETIGDLRNWLEETYA.

The N-terminal acylcarrier protein transacylase domain (SAT) stretch occupies residues 27–265; the sequence is RDLQDLFRQA…ALPVYGGLCH (239 aa). The region spanning 399-833 is the Ketosynthase family 3 (KS3) domain; the sequence is QSKLAIVGMS…GGNTTMILED (435 aa). Active-site for beta-ketoacyl synthase activity residues include Cys-572, His-708, and His-751. The segment at 934–1254 is malonyl-CoA:ACP transacylase (MAT) domain; it reads FSFTGQGASH…IAQLYTVGVD (321 aa). Positions 1323-1475 are N-terminal hotdog fold; the sequence is QQIVEQVFDT…SLTHLVRDRI (153 aa). A PKS/mFAS DH domain is found at 1323-1634; the sequence is QQIVEQVFDT…FHRYRRILLE (312 aa). Residue His-1357 is the Proton acceptor; for dehydratase activity of the active site. Residues 1357 to 1631 are product template (PT) domain; the sequence is HRMNDCGVAT…GIEFHRYRRI (275 aa). The interval 1487–1634 is C-terminal hotdog fold; it reads ANRLSHNMAY…FHRYRRILLE (148 aa). Asp-1545 acts as the Proton donor; for dehydratase activity in catalysis. Residues 1644-1667 form a disordered region; that stretch reads NLDDTTETKDISSSTQHSVPVSRQ. The span at 1654 to 1664 shows a compositional bias: polar residues; sequence ISSSTQHSVPV. The region spanning 1715–1789 is the Carrier domain; that stretch reads SSITNRAMQL…DLRNWLEETY (75 aa). Ser-1749 carries the O-(pantetheine 4'-phosphoryl)serine modification.

It carries out the reaction holo-[ACP] + 8 malonyl-CoA + 8 H(+) = atrochrysone carboxyl-[ACP] + 8 CO2 + 8 CoA + 2 H2O. It participates in pigment biosynthesis. In terms of biological role, non-reducing polyketide synthase; part of the gene cluster that mediates the biosynthesis of the bianthraquinone cladofulvin, a conidial pigment not required for virulence but that plays a role in fitness and resistance to environmental stresses including UV light and low-temperature stress. The pathway begins with the synthesis of atrochrysone thioester by the polyketide synthase (PKS) claG. The atrochrysone carboxyl ACP thioesterase claF then breaks the thioester bond and releases the atrochrysone carboxylic acid from claG. This compound is decarboxylated by claH to yield emodin, which is further converted to chrysophanol hydroquinone by the reductase claC and the dehydratase claB. The cytochrome P450 monooxygenase claM then catalyzes the dimerization of nataloe-emodin to cladofulvin. The sequence is that of Atrochrysone carboxylic acid synthase from Passalora fulva (Tomato leaf mold).